Consider the following 380-residue polypeptide: Cytochrome b (380 aa).

4 helical membrane-spanning segments follow: residues 33 to 53 (FGSL…FLAM), 77 to 98 (WLIR…YLHI), 113 to 133 (WNVG…GYVL), and 178 to 198 (FFAF…LHFL). Residues His83 and His97 each contribute to the heme b site. Positions 182 and 196 each coordinate heme b. His201 serves as a coordination point for a ubiquinone. Transmembrane regions (helical) follow at residues 226-246 (YKDL…SLFS), 288-308 (LGGV…PILH), 320-340 (LTQI…WIGG), and 347-367 (FIIV…VIMP).

This sequence belongs to the cytochrome b family. The cytochrome bc1 complex contains 3 respiratory subunits (MT-CYB, CYC1 and UQCRFS1), 2 core proteins (UQCRC1 and UQCRC2) and probably 6 low-molecular weight proteins. Requires heme b as cofactor.

Its subcellular location is the mitochondrion inner membrane. In terms of biological role, component of the ubiquinol-cytochrome c reductase complex (complex III or cytochrome b-c1 complex) that is part of the mitochondrial respiratory chain. The b-c1 complex mediates electron transfer from ubiquinol to cytochrome c. Contributes to the generation of a proton gradient across the mitochondrial membrane that is then used for ATP synthesis. The polypeptide is Cytochrome b (mt-cyb) (Zeus faber (John Dory)).